Reading from the N-terminus, the 107-residue chain is Transmembrane protein 213 (107 aa).

Positions methionine 1–alanine 27 are cleaved as a signal peptide. At glutamate 28–tyrosine 70 the chain is on the extracellular side. Residues glycine 71–valine 91 traverse the membrane as a helical segment. Residues aspartate 92–alanine 107 are Cytoplasmic-facing.

It is found in the membrane. The chain is Transmembrane protein 213 (TMEM213) from Homo sapiens (Human).